A 226-amino-acid chain; its full sequence is NAD(P)H-quinone oxidoreductase subunit K, chloroplastic (226 aa).

[4Fe-4S] cluster contacts are provided by Cys43, Cys44, Cys108, and Cys139.

Belongs to the complex I 20 kDa subunit family. As to quaternary structure, NDH is composed of at least 16 different subunits, 5 of which are encoded in the nucleus. It depends on [4Fe-4S] cluster as a cofactor.

It is found in the plastid. The protein resides in the chloroplast thylakoid membrane. The enzyme catalyses a plastoquinone + NADH + (n+1) H(+)(in) = a plastoquinol + NAD(+) + n H(+)(out). The catalysed reaction is a plastoquinone + NADPH + (n+1) H(+)(in) = a plastoquinol + NADP(+) + n H(+)(out). In terms of biological role, NDH shuttles electrons from NAD(P)H:plastoquinone, via FMN and iron-sulfur (Fe-S) centers, to quinones in the photosynthetic chain and possibly in a chloroplast respiratory chain. The immediate electron acceptor for the enzyme in this species is believed to be plastoquinone. Couples the redox reaction to proton translocation, and thus conserves the redox energy in a proton gradient. This Lupinus luteus (European yellow lupine) protein is NAD(P)H-quinone oxidoreductase subunit K, chloroplastic.